The primary structure comprises 300 residues: MTASQSAQFKSEITAMPSWLRRPIGKASELSTVQRIIKQRQIHTICEEGRCPNRGECYAQKTATFLLMGPTCTRVCAFCQVDKGHAPMPLDPEEGQKVAEAVQLLGLRYVVLTSVARDDLQDQGASHFVQTMEAIRQLNPGTQIEVLTPDFWGGAGAGESGQRQRIKMIVEAQPACFNHNIETVRRLTGPVRRGAKYDRSLRVLSLVKELNPRIPTKSGLMVGYGETVAELVEAMTDLRNIGCDRLTIGQYMRPSLEHLPVQKYWTPEEFEHLGKLAREMGFSHVRSAPLVRSSYHAGEE.

C46, C51, C57, C72, C76, C79, and S294 together coordinate [4Fe-4S] cluster. In terms of domain architecture, Radical SAM core spans 58–283 (YAQKTATFLL…GKLAREMGFS (226 aa)).

Belongs to the radical SAM superfamily. Lipoyl synthase family. The cofactor is [4Fe-4S] cluster.

The protein localises to the cytoplasm. It catalyses the reaction [[Fe-S] cluster scaffold protein carrying a second [4Fe-4S](2+) cluster] + N(6)-octanoyl-L-lysyl-[protein] + 2 oxidized [2Fe-2S]-[ferredoxin] + 2 S-adenosyl-L-methionine + 4 H(+) = [[Fe-S] cluster scaffold protein] + N(6)-[(R)-dihydrolipoyl]-L-lysyl-[protein] + 4 Fe(3+) + 2 hydrogen sulfide + 2 5'-deoxyadenosine + 2 L-methionine + 2 reduced [2Fe-2S]-[ferredoxin]. The protein operates within protein modification; protein lipoylation via endogenous pathway; protein N(6)-(lipoyl)lysine from octanoyl-[acyl-carrier-protein]: step 2/2. In terms of biological role, catalyzes the radical-mediated insertion of two sulfur atoms into the C-6 and C-8 positions of the octanoyl moiety bound to the lipoyl domains of lipoate-dependent enzymes, thereby converting the octanoylated domains into lipoylated derivatives. This chain is Lipoyl synthase 2, found in Nostoc sp. (strain PCC 7120 / SAG 25.82 / UTEX 2576).